A 90-amino-acid chain; its full sequence is Small ribosomal subunit protein bS16 (90 aa).

It belongs to the bacterial ribosomal protein bS16 family.

The chain is Small ribosomal subunit protein bS16 from Clostridioides difficile (strain 630) (Peptoclostridium difficile).